The sequence spans 1125 residues: Exportin-6 (1125 aa).

A2 is subject to N-acetylalanine. The Importin N-terminal domain maps to 31-97 (IEELLNNFAQ…RSCLPKLLLA (67 aa)). Position 199 is a phosphoserine (S199). Residues T201 and T204 each carry the phosphothreonine modification. 2 positions are modified to phosphoserine: S208 and S224.

It belongs to the exportin family. As to quaternary structure, found in a complex with XPO6, Ran, ACTB and PFN1. Interacts with ACTB. Interacts with ACTB in a RanGTP-dependent manner.

It is found in the nucleus. The protein resides in the cytoplasm. Its function is as follows. Mediates the nuclear export of actin and profilin-actin complexes in somatic cells. This is Exportin-6 (XPO6) from Homo sapiens (Human).